A 92-amino-acid polypeptide reads, in one-letter code: Large ribosomal subunit protein eL43y (92 aa).

A C4-type zinc finger spans residues 39–60 (CEFCGKYGVKRKAVGIWGCKDC).

It belongs to the eukaryotic ribosomal protein eL43 family.

This chain is Large ribosomal subunit protein eL43y (RPL37AC), found in Arabidopsis thaliana (Mouse-ear cress).